The following is a 449-amino-acid chain: Tubulin alpha chain (449 aa).

GTP-binding residues include Q11, E71, S140, G144, T145, T179, N206, and N228. E71 lines the Mg(2+) pocket. E254 is a catalytic residue.

It belongs to the tubulin family. Dimer of alpha and beta chains. A typical microtubule is a hollow water-filled tube with an outer diameter of 25 nm and an inner diameter of 15 nM. Alpha-beta heterodimers associate head-to-tail to form protofilaments running lengthwise along the microtubule wall with the beta-tubulin subunit facing the microtubule plus end conferring a structural polarity. Microtubules usually have 13 protofilaments but different protofilament numbers can be found in some organisms and specialized cells. Mg(2+) serves as cofactor.

It localises to the cytoplasm. The protein localises to the cytoskeleton. It carries out the reaction GTP + H2O = GDP + phosphate + H(+). In terms of biological role, tubulin is the major constituent of microtubules, a cylinder consisting of laterally associated linear protofilaments composed of alpha- and beta-tubulin heterodimers. Microtubules grow by the addition of GTP-tubulin dimers to the microtubule end, where a stabilizing cap forms. Below the cap, tubulin dimers are in GDP-bound state, owing to GTPase activity of alpha-tubulin. This chain is Tubulin alpha chain (TUB1), found in Gibberella zeae (strain ATCC MYA-4620 / CBS 123657 / FGSC 9075 / NRRL 31084 / PH-1) (Wheat head blight fungus).